The sequence spans 440 residues: Xaa-Pro dipeptidase (440 aa).

Residues Asp-244, Asp-255, His-335, Glu-380, and Glu-419 each coordinate Mn(2+).

Belongs to the peptidase M24B family. Bacterial-type prolidase subfamily. It depends on Mn(2+) as a cofactor.

It catalyses the reaction Xaa-L-Pro dipeptide + H2O = an L-alpha-amino acid + L-proline. Its function is as follows. Splits dipeptides with a prolyl residue in the C-terminal position. This is Xaa-Pro dipeptidase from Shewanella pealeana (strain ATCC 700345 / ANG-SQ1).